Here is a 124-residue protein sequence, read N- to C-terminus: S-adenosylmethionine decarboxylase proenzyme (124 aa).

Ser-63 acts as the Schiff-base intermediate with substrate; via pyruvic acid in catalysis. The residue at position 63 (Ser-63) is a Pyruvic acid (Ser); by autocatalysis. His-68 (proton acceptor; for processing activity) is an active-site residue. The Proton donor; for catalytic activity role is filled by Cys-83.

Belongs to the prokaryotic AdoMetDC family. Type 1 subfamily. In terms of assembly, heterotetramer of two alpha and two beta chains arranged as a dimer of alpha/beta heterodimers. Requires pyruvate as cofactor. Post-translationally, is synthesized initially as an inactive proenzyme. Formation of the active enzyme involves a self-maturation process in which the active site pyruvoyl group is generated from an internal serine residue via an autocatalytic post-translational modification. Two non-identical subunits are generated from the proenzyme in this reaction, and the pyruvate is formed at the N-terminus of the alpha chain, which is derived from the carboxyl end of the proenzyme. The post-translation cleavage follows an unusual pathway, termed non-hydrolytic serinolysis, in which the side chain hydroxyl group of the serine supplies its oxygen atom to form the C-terminus of the beta chain, while the remainder of the serine residue undergoes an oxidative deamination to produce ammonia and the pyruvoyl group blocking the N-terminus of the alpha chain.

The enzyme catalyses S-adenosyl-L-methionine + H(+) = S-adenosyl 3-(methylsulfanyl)propylamine + CO2. It functions in the pathway amine and polyamine biosynthesis; S-adenosylmethioninamine biosynthesis; S-adenosylmethioninamine from S-adenosyl-L-methionine: step 1/1. Its function is as follows. Catalyzes the decarboxylation of S-adenosylmethionine to S-adenosylmethioninamine (dcAdoMet), the propylamine donor required for the synthesis of the polyamines spermine and spermidine from the diamine putrescine. The sequence is that of S-adenosylmethionine decarboxylase proenzyme from Caldicellulosiruptor bescii (strain ATCC BAA-1888 / DSM 6725 / KCTC 15123 / Z-1320) (Anaerocellum thermophilum).